The sequence spans 226 residues: Triosephosphate isomerase (226 aa).

10-12 (NFK) contributes to the substrate binding site. The active-site Electrophile is the His96. The Proton acceptor role is filled by Glu144. Substrate contacts are provided by residues Ile149, Gly184, and 205–206 (AS).

It belongs to the triosephosphate isomerase family. In terms of assembly, homotetramer; dimer of dimers.

It is found in the cytoplasm. It catalyses the reaction D-glyceraldehyde 3-phosphate = dihydroxyacetone phosphate. It participates in carbohydrate biosynthesis; gluconeogenesis. The protein operates within carbohydrate degradation; glycolysis; D-glyceraldehyde 3-phosphate from glycerone phosphate: step 1/1. Involved in the gluconeogenesis. Catalyzes stereospecifically the conversion of dihydroxyacetone phosphate (DHAP) to D-glyceraldehyde-3-phosphate (G3P). The sequence is that of Triosephosphate isomerase from Methanopyrus kandleri (strain AV19 / DSM 6324 / JCM 9639 / NBRC 100938).